The chain runs to 342 residues: Phosphoribosylformylglycinamidine cyclo-ligase (342 aa).

The protein belongs to the AIR synthase family.

The protein resides in the cytoplasm. It catalyses the reaction 2-formamido-N(1)-(5-O-phospho-beta-D-ribosyl)acetamidine + ATP = 5-amino-1-(5-phospho-beta-D-ribosyl)imidazole + ADP + phosphate + H(+). Its pathway is purine metabolism; IMP biosynthesis via de novo pathway; 5-amino-1-(5-phospho-D-ribosyl)imidazole from N(2)-formyl-N(1)-(5-phospho-D-ribosyl)glycinamide: step 2/2. This Gloeothece citriformis (strain PCC 7424) (Cyanothece sp. (strain PCC 7424)) protein is Phosphoribosylformylglycinamidine cyclo-ligase.